A 417-amino-acid polypeptide reads, in one-letter code: Serine hydroxymethyltransferase (417 aa).

Residues L121 and 125 to 127 (GHL) contribute to the (6S)-5,6,7,8-tetrahydrofolate site. K229 is subject to N6-(pyridoxal phosphate)lysine. 355–357 (SPF) is a (6S)-5,6,7,8-tetrahydrofolate binding site.

Belongs to the SHMT family. As to quaternary structure, homodimer. Requires pyridoxal 5'-phosphate as cofactor.

It is found in the cytoplasm. The enzyme catalyses (6R)-5,10-methylene-5,6,7,8-tetrahydrofolate + glycine + H2O = (6S)-5,6,7,8-tetrahydrofolate + L-serine. It participates in one-carbon metabolism; tetrahydrofolate interconversion. Its pathway is amino-acid biosynthesis; glycine biosynthesis; glycine from L-serine: step 1/1. Catalyzes the reversible interconversion of serine and glycine with tetrahydrofolate (THF) serving as the one-carbon carrier. This reaction serves as the major source of one-carbon groups required for the biosynthesis of purines, thymidylate, methionine, and other important biomolecules. Also exhibits THF-independent aldolase activity toward beta-hydroxyamino acids, producing glycine and aldehydes, via a retro-aldol mechanism. The chain is Serine hydroxymethyltransferase from Buchnera aphidicola subsp. Baizongia pistaciae (strain Bp).